A 220-amino-acid chain; its full sequence is Protein-L-isoaspartate O-methyltransferase (220 aa).

Residue Ser70 is part of the active site.

The protein belongs to the methyltransferase superfamily. L-isoaspartyl/D-aspartyl protein methyltransferase family.

Its subcellular location is the cytoplasm. It catalyses the reaction [protein]-L-isoaspartate + S-adenosyl-L-methionine = [protein]-L-isoaspartate alpha-methyl ester + S-adenosyl-L-homocysteine. Functionally, catalyzes the methyl esterification of L-isoaspartyl residues in peptides and proteins that result from spontaneous decomposition of normal L-aspartyl and L-asparaginyl residues. It plays a role in the repair and/or degradation of damaged proteins. This chain is Protein-L-isoaspartate O-methyltransferase, found in Halorhodospira halophila (strain DSM 244 / SL1) (Ectothiorhodospira halophila (strain DSM 244 / SL1)).